A 24-amino-acid polypeptide reads, in one-letter code: KQFTKCELSQVLKDMDGYGGIALP.

The protein belongs to the glycosyl hydrolase 22 family. As to quaternary structure, lactose synthase (LS) is a heterodimer of a catalytic component, beta1,4-galactosyltransferase (beta4Gal-T1) and a regulatory component, alpha-lactalbumin (LA). Glycosylated (50% of the proteins). Mammary gland specific. Secreted in milk.

It is found in the secreted. Its function is as follows. Regulatory subunit of lactose synthase, changes the substrate specificity of galactosyltransferase in the mammary gland making glucose a good acceptor substrate for this enzyme. This enables LS to synthesize lactose, the major carbohydrate component of milk. In other tissues, galactosyltransferase transfers galactose onto the N-acetylglucosamine of the oligosaccharide chains in glycoproteins. This chain is Alpha-lactalbumin (LALBA), found in Felis catus (Cat).